We begin with the raw amino-acid sequence, 210 residues long: Redox-sensing transcriptional repressor Rex (210 aa).

Positions 16–55 (VYSRHLTDVDRKGIVTISSGDIAEGVGVSPAQVRKDLAYF) form a DNA-binding region, H-T-H motif. Position 90–95 (90–95 (GMGNLG)) interacts with NAD(+).

This sequence belongs to the transcriptional regulatory Rex family. As to quaternary structure, homodimer.

The protein resides in the cytoplasm. Functionally, modulates transcription in response to changes in cellular NADH/NAD(+) redox state. The sequence is that of Redox-sensing transcriptional repressor Rex from Desulfitobacterium hafniense (strain DSM 10664 / DCB-2).